The primary structure comprises 1883 residues: Zinc finger protein 106 (1883 aa).

Glycyl lysine isopeptide (Lys-Gly) (interchain with G-Cter in SUMO2) cross-links involve residues Ile6 and Lys37. The segment at 20–44 (HECRVCGVTEVGLSAYAKHISGQLH) adopts a C2H2-type 1; atypical zinc-finger fold. The interval 39–162 (ISGQLHKDNV…NGGGPRGRSG (124 aa)) is disordered. The span at 52–67 (EREDDGKGEEEEEDYF) shows a compositional bias: acidic residues. Residues Lys69 and Lys76 each participate in a glycyl lysine isopeptide (Lys-Gly) (interchain with G-Cter in SUMO2) cross-link. Composition is skewed to basic and acidic residues over residues 77-86 (QRKEQSRQDE), 96-116 (SDDR…DRES), and 128-138 (PQRDWKWEKDG). Lys133 participates in a covalent cross-link: Glycyl lysine isopeptide (Lys-Gly) (interchain with G-Cter in SUMO2). Over residues 139–148 (FNNTRKNSFP) the composition is skewed to polar residues. Residues Lys243, Lys287, and Lys305 each participate in a glycyl lysine isopeptide (Lys-Gly) (interchain with G-Cter in SUMO2) cross-link. The segment covering 322–338 (QTTKQADTATSKVSGKN) has biased composition (polar residues). Positions 322–356 (QTTKQADTATSKVSGKNGSAAREKPRRWTPYPSQK) are disordered. Glycyl lysine isopeptide (Lys-Gly) (interchain with G-Cter in SUMO2) cross-links involve residues Lys356, Lys365, Lys371, and Lys417. Positions 389-423 (IQEPQTDETRNSPTQKTQKEIHTGSLNHKASSDSA) are disordered. Residues 412–423 (GSLNHKASSDSA) are compositionally biased toward polar residues. Ser422 carries the phosphoserine modification. Residues Lys451, Lys461, Lys477, Lys492, Lys505, Lys515, Lys525, Lys539, and Lys557 each participate in a glycyl lysine isopeptide (Lys-Gly) (interchain with G-Cter in SUMO2) cross-link. The tract at residues 457-501 (CPATKSLSQKQDPKNISKNTKTNFFSPGEHSNPSNKPTVEDNHGP) is disordered. The span at 461–493 (KSLSQKQDPKNISKNTKTNFFSPGEHSNPSNKP) shows a compositional bias: polar residues. The disordered stretch occupies residues 586-637 (LEDESDGETSDTEKHGTKIGTLGSATTELLSGSTRTADEKEEDDRILKTSRE). The residue at position 590 (Ser590) is a Phosphoserine. A Glycyl lysine isopeptide (Lys-Gly) (interchain with G-Cter in SUMO2) cross-link involves residue Lys603. Positions 608–620 (GSATTELLSGSTR) are enriched in polar residues. Residues Ser641 and Ser661 each carry the phosphoserine modification. Glycyl lysine isopeptide (Lys-Gly) (interchain with G-Cter in SUMO2) cross-links involve residues Lys671, Lys684, Lys705, Lys721, Lys741, Lys775, and Lys807. Ser859, Ser861, Ser864, and Ser893 each carry phosphoserine. The interval 879–945 (EEGTGKENEP…HSAQLSSDHI (67 aa)) is disordered. A compositionally biased stretch (polar residues) spans 888–906 (PQQMVSPSNSLRAGQSQKA). Residues Lys905 and Lys911 each participate in a glycyl lysine isopeptide (Lys-Gly) (interchain with G-Cter in SUMO2) cross-link. Ser937 carries the post-translational modification Phosphoserine. A Glycyl lysine isopeptide (Lys-Gly) (interchain with G-Cter in SUMO2) cross-link involves residue Lys953. Polar residues predominate over residues 958–976 (QERSIPPSENQNSQESNGE). Disordered regions lie at residues 958–982 (QERS…CLSS), 997–1048 (ATDS…KERS), 1121–1140 (EPSE…RRNS), and 1182–1218 (PTFQ…VPPS). The residue at position 1021 (Thr1021) is a Phosphothreonine. Residues Ser1025, Ser1026, and Ser1031 each carry the phosphoserine modification. Residues 1035-1045 (KNKRRKIKGKK) show a composition bias toward basic residues. Ser1249 is subject to Phosphoserine. Positions 1252-1483 (ESTESFHEPS…EVSSTSEIGT (232 aa)) are disordered. A compositionally biased stretch (basic and acidic residues) spans 1255–1277 (ESFHEPSQELKFSVEQRNTRNRE). Lys1265 is covalently cross-linked (Glycyl lysine isopeptide (Lys-Gly) (interchain with G-Cter in SUMO2)). Polar residues-rich tracts occupy residues 1278–1291 (NSPS…SSIN) and 1299–1312 (KGNS…SSFL). 3 positions are modified to phosphoserine: Ser1279, Ser1281, and Ser1284. Lys1299 participates in a covalent cross-link: Glycyl lysine isopeptide (Lys-Gly) (interchain with G-Cter in SUMO2). At Ser1302 the chain carries Phosphoserine. Lys1324 participates in a covalent cross-link: Glycyl lysine isopeptide (Lys-Gly) (interchain with G-Cter in SUMO2). Phosphoserine is present on Ser1328. Residues 1333–1346 (PEQQAESTLTSAET) are compositionally biased toward polar residues. The span at 1349 to 1362 (SKKKKKLRKKKSLR) shows a compositional bias: basic residues. Position 1370 is a phosphoserine (Ser1370). Thr1372 is modified (phosphothreonine). Residues Lys1380, Lys1392, and Lys1395 each participate in a glycyl lysine isopeptide (Lys-Gly) (interchain with G-Cter in SUMO2) cross-link. Basic and acidic residues-rich tracts occupy residues 1402 to 1416 (EDSR…VRDE) and 1444 to 1456 (GEEK…KKDI). Lys1454 participates in a covalent cross-link: Glycyl lysine isopeptide (Lys-Gly) (interchain with G-Cter in SUMO2). The span at 1457-1481 (WNSTEQNPLETSRSGCDEVSSTSEI) shows a compositional bias: polar residues. Ser1468 carries the phosphoserine modification. Residues Lys1486 and Lys1504 each participate in a glycyl lysine isopeptide (Lys-Gly) (interchain with G-Cter in SUMO2) cross-link. Positions 1502–1513 (SIKGSKNSSEIS) are enriched in polar residues. The interval 1502 to 1527 (SIKGSKNSSEISSEPGDDDEPTEGSF) is disordered. 6 WD repeats span residues 1529–1568 (GHQA…GVFE), 1570–1611 (HTSK…CVEQ), 1654–1695 (HGPR…LLRT), 1698–1737 (GHSK…RIYK), 1738–1775 (GHNH…RLQV), and 1778–1815 (GHKD…NYRC). Residue Lys1585 forms a Glycyl lysine isopeptide (Lys-Gly) (interchain with G-Cter in SUMO2) linkage. Residue Lys1737 forms a Glycyl lysine isopeptide (Lys-Gly) (interchain with G-Cter in SUMO2) linkage. A C2H2-type 2; atypical zinc finger spans residues 1813–1838 (YRCWWHGCSLIFGVVDHLKQHLLTDH). Residue Lys1864 forms a Glycyl lysine isopeptide (Lys-Gly) (interchain with G-Cter in SUMO2) linkage.

Interacts with KNOP1. Interacts with TARDBP and NUP107. Interacts (via N-terminus) with RBM39. Interacts with the SH3 domains of FYN and GRB2. Post-translationally, phosphorylated by FYN in vitro.

Its subcellular location is the nucleus. It is found in the nucleolus. The protein localises to the nucleus speckle. Functionally, RNA-binding protein. Specifically binds to 5'-GGGGCC-3' sequence repeats in RNA. Essential for maintenance of peripheral motor neuron and skeletal muscle function. Required for normal expression and/or alternative splicing of a number of genes in spinal cord and skeletal muscle, including the neurite outgrowth inhibitor RTN4. Also contributes to normal mitochondrial respiratory function in motor neurons, via an unknown mechanism. The sequence is that of Zinc finger protein 106 (ZNF106) from Homo sapiens (Human).